A 290-amino-acid polypeptide reads, in one-letter code: MQQIHRLERKLLRATAEAIRDFDLVSQGDRIMVAVSGGKDSYTLLHLLMRLRERAPIDFDLVAVNLDQGQPGFPAHVVEDHLRSLGVPYRMLQRDTYSVVRRLVPEGKTTCPVCSRLRRGVLYNAAVEMGCTKIALGHHRDDLVETLLLSALYSGALKSMPPKLRSRDGRNVVIRPLCYAAEEDVAAFAEAMRFPIVPCDLCGSQPNLRRKRVKRLLAELSAEHPAVKGNLLHALGHVVPSHLLDRDLHRQLADATGRDPWLDAEDEEAEDCGEPAGDGVVSLGGARGGR.

Positions 36 to 41 (SGGKDS) match the PP-loop motif motif. Residues cysteine 111, cysteine 114, and cysteine 202 each contribute to the [4Fe-4S] cluster site. Residues 259-290 (DPWLDAEDEEAEDCGEPAGDGVVSLGGARGGR) form a disordered region. The segment covering 262–273 (LDAEDEEAEDCG) has biased composition (acidic residues).

It belongs to the TtcA family. Homodimer. Requires Mg(2+) as cofactor. The cofactor is [4Fe-4S] cluster.

It localises to the cytoplasm. The catalysed reaction is cytidine(32) in tRNA + S-sulfanyl-L-cysteinyl-[cysteine desulfurase] + AH2 + ATP = 2-thiocytidine(32) in tRNA + L-cysteinyl-[cysteine desulfurase] + A + AMP + diphosphate + H(+). The protein operates within tRNA modification. In terms of biological role, catalyzes the ATP-dependent 2-thiolation of cytidine in position 32 of tRNA, to form 2-thiocytidine (s(2)C32). The sulfur atoms are provided by the cysteine/cysteine desulfurase (IscS) system. The protein is tRNA-cytidine(32) 2-sulfurtransferase of Anaeromyxobacter dehalogenans (strain 2CP-C).